A 522-amino-acid chain; its full sequence is ATP synthase subunit alpha 2 (522 aa).

176 to 183 (GDRQTGKT) is an ATP binding site.

The protein belongs to the ATPase alpha/beta chains family. As to quaternary structure, F-type ATPases have 2 components, CF(1) - the catalytic core - and CF(0) - the membrane proton channel. CF(1) has five subunits: alpha(3), beta(3), gamma(1), delta(1), epsilon(1). CF(0) has three main subunits: a(1), b(2) and c(9-12). The alpha and beta chains form an alternating ring which encloses part of the gamma chain. CF(1) is attached to CF(0) by a central stalk formed by the gamma and epsilon chains, while a peripheral stalk is formed by the delta and b chains.

The protein localises to the cell inner membrane. The enzyme catalyses ATP + H2O + 4 H(+)(in) = ADP + phosphate + 5 H(+)(out). Functionally, produces ATP from ADP in the presence of a proton gradient across the membrane. The alpha chain is a regulatory subunit. This is ATP synthase subunit alpha 2 from Syntrophotalea carbinolica (strain DSM 2380 / NBRC 103641 / GraBd1) (Pelobacter carbinolicus).